A 204-amino-acid chain; its full sequence is Large ribosomal subunit protein bL25 (204 aa).

The protein belongs to the bacterial ribosomal protein bL25 family. CTC subfamily. Part of the 50S ribosomal subunit; part of the 5S rRNA/L5/L18/L25 subcomplex. Contacts the 5S rRNA. Binds to the 5S rRNA independently of L5 and L18.

Functionally, this is one of the proteins that binds to the 5S RNA in the ribosome where it forms part of the central protuberance. The chain is Large ribosomal subunit protein bL25 from Pseudomonas syringae pv. syringae (strain B728a).